Consider the following 171-residue polypeptide: Shikimate kinase (171 aa).

Residue 14–19 participates in ATP binding; the sequence is GAGKST. Ser18 contributes to the Mg(2+) binding site. The substrate site is built by Asp36, Arg60, and Gly82. Arg120 is an ATP binding site. Substrate is bound at residue Arg139. Gln156 is a binding site for ATP.

This sequence belongs to the shikimate kinase family. As to quaternary structure, monomer. The cofactor is Mg(2+).

Its subcellular location is the cytoplasm. The catalysed reaction is shikimate + ATP = 3-phosphoshikimate + ADP + H(+). It participates in metabolic intermediate biosynthesis; chorismate biosynthesis; chorismate from D-erythrose 4-phosphate and phosphoenolpyruvate: step 5/7. Its function is as follows. Catalyzes the specific phosphorylation of the 3-hydroxyl group of shikimic acid using ATP as a cosubstrate. This Shewanella putrefaciens (strain CN-32 / ATCC BAA-453) protein is Shikimate kinase.